The following is a 542-amino-acid chain: Sialate O-acetylesterase (542 aa).

The N-terminal stretch at 1-23 (MVSPRPVGLMLLLIIARVSRGAG) is a signal peptide. N-linked (GlcNAc...) asparagine glycosylation is found at Asn107, Asn138, Asn188, Asn294, Asn357, Asn428, Asn449, and Asn463.

Disulfide-linked heterodimer of a small subunit and a large subunit. The two subunits are derived from a single precursor by proteolytic cleavage. Post-translationally, glycosylated. Widely expressed.

It is found in the lysosome. It catalyses the reaction N-acetyl-9-O-acetylneuraminate + H2O = N-acetylneuraminate + acetate + H(+). It carries out the reaction an Ac-O-9-sialoglycoconjugate + H2O = a sialoglycoconjugate + acetate + H(+). Its activity is regulated as follows. Inhibited by diisopropyl fluorophosphate and diethyl-P-nitrophenyl phosphate. In terms of biological role, catalyzes the removal of O-acetyl ester groups from position 9 of the free diacetylated sialate N-acetyl-9-O-acetylneuraminate (Neu5,9Ac2) in the cytosol and of the diacetylated sialate residues of sialylglycoconjugates in the lysosomes. Together with the sialate-O-acetyltransferase they regulate the balance of acetylated sialoglycoconjugates, key players in various processes such as cell-cell interactions, host-pathogen recognition, and tumor antigenicity. The protein is Sialate O-acetylesterase (Siae) of Rattus norvegicus (Rat).